Consider the following 152-residue polypeptide: Ribonuclease pancreatic gamma-type (152 aa).

A signal peptide spans 1–25; sequence MGLEKSFILFSLLVLVLGCVQPSLV. Residues 26-48 are disordered; it reads GESKESPSEKFKRRHMDEEGPYQ. Positions 27–43 are enriched in basic and acidic residues; sequence ESKESPSEKFKRRHMDE. Residues lysine 35 and arginine 38 each coordinate substrate. Histidine 40 (proton acceptor) is an active-site residue. Disulfide bonds link cysteine 54–cysteine 112, cysteine 68–cysteine 123, cysteine 86–cysteine 138, and cysteine 93–cysteine 100. Residues 69-73 and lysine 94 contribute to the substrate site; that span reads KPLNT. The active-site Proton donor is the histidine 147.

Belongs to the pancreatic ribonuclease family. As to quaternary structure, monomer.

It is found in the secreted. The catalysed reaction is an [RNA] containing cytidine + H2O = an [RNA]-3'-cytidine-3'-phosphate + a 5'-hydroxy-ribonucleotide-3'-[RNA].. It carries out the reaction an [RNA] containing uridine + H2O = an [RNA]-3'-uridine-3'-phosphate + a 5'-hydroxy-ribonucleotide-3'-[RNA].. Its function is as follows. Endonuclease that catalyzes the cleavage of RNA on the 3' side of pyrimidine nucleotides. Acts on single-stranded and double-stranded RNA. In Rattus fuscipes (Bush rat), this protein is Ribonuclease pancreatic gamma-type.